A 550-amino-acid chain; its full sequence is MTETHNDPEELARRVASLSAQNERLAQILVEARSKIVGLQQQIDDLAQPPSTYATFIRSYSDGTADVMVQGRKMRLTSLPAAMVSTARPGQQVRLNEAMAIVETMTYDHTGELVTVKELIGTHRAMVVGRGDDERVVNLAGSLIGRDGPTIRTGDSVLVDLKAGYALEKIDKSEVEELVLEEVPRVAYEDIGGLSRQIDTIKDAVELPFLHPDLYREHGLKAPKGILLYGPPGCGKTLIAKAVAHSLAQTVGQGNNTPTDDTRGYFLNIKGPELLNKYVGETERQIRLIFTRARDKAAQGHPVVVFFDEMESLFRTRGTGLSSDVETTIVPQLLAEIDGVERLDNVIVIGASNREDMIDPAILRPGRLDVKIKIERPDAEAALDIFSKYLTPDLPIHPVDLAEHGGNAQDAVTAMGQRVVEHMYATTPDNQFLEVTYASGDKETLYFKDFSSGAMIQNIVDRAKKAAIKGYLSHGTRGLQVEHLLAACDDEFQENEDLPNTTNPDDWARISGKKGERIVFIRTIVQRKGEGKNPTPAKAIETPHNTGPYL.

Positions 9–48 (EELARRVASLSAQNERLAQILVEARSKIVGLQQQIDDLAQ) form a coiled coil. 233 to 238 (GCGKTL) lines the ATP pocket. Residues 528 to 550 (KGEGKNPTPAKAIETPHNTGPYL) are disordered. The tract at residues 549 to 550 (YL) is docks into pockets in the proteasome alpha-ring.

Belongs to the AAA ATPase family. As to quaternary structure, homohexamer. Assembles into a hexameric ring structure that caps the 20S proteasome core. Strongly interacts with the prokaryotic ubiquitin-like protein Pup through a hydrophobic interface; the interacting region of ARC lies in its N-terminal coiled-coil domain. There is one Pup binding site per ARC hexamer ring. Upon ATP-binding, the C-terminus of ARC interacts with the alpha-rings of the proteasome core, possibly by binding to the intersubunit pockets.

Its pathway is protein degradation; proteasomal Pup-dependent pathway. ATPase which is responsible for recognizing, binding, unfolding and translocation of pupylated proteins into the bacterial 20S proteasome core particle. May be essential for opening the gate of the 20S proteasome via an interaction with its C-terminus, thereby allowing substrate entry and access to the site of proteolysis. Thus, the C-termini of the proteasomal ATPase may function like a 'key in a lock' to induce gate opening and therefore regulate proteolysis. The sequence is that of Proteasome-associated ATPase from Jonesia denitrificans (strain ATCC 14870 / DSM 20603 / BCRC 15368 / CIP 55.134 / JCM 11481 / NBRC 15587 / NCTC 10816 / Prevot 55134) (Listeria denitrificans).